We begin with the raw amino-acid sequence, 269 residues long: Adenosylcobinamide-GDP ribazoletransferase (269 aa).

Helical transmembrane passes span 8-28 (QFNLILLAVSFFTRLPVPTAI), 41-61 (YFPLVGWLLAALLSAFYCFML), 70-90 (VCLLIIFSLMLTGAIHEDGLA), 114-136 (IGTYGTCALICALLSKFILLSSL), and 196-216 (VPAVLWLPLSSAILVIVSACV).

This sequence belongs to the CobS family. The cofactor is Mg(2+).

It localises to the cell inner membrane. It catalyses the reaction alpha-ribazole + adenosylcob(III)inamide-GDP = adenosylcob(III)alamin + GMP + H(+). It carries out the reaction alpha-ribazole 5'-phosphate + adenosylcob(III)inamide-GDP = adenosylcob(III)alamin 5'-phosphate + GMP + H(+). It functions in the pathway cofactor biosynthesis; adenosylcobalamin biosynthesis; adenosylcobalamin from cob(II)yrinate a,c-diamide: step 7/7. Its function is as follows. Joins adenosylcobinamide-GDP and alpha-ribazole to generate adenosylcobalamin (Ado-cobalamin). Also synthesizes adenosylcobalamin 5'-phosphate from adenosylcobinamide-GDP and alpha-ribazole 5'-phosphate. The chain is Adenosylcobinamide-GDP ribazoletransferase from Pseudoalteromonas atlantica (strain T6c / ATCC BAA-1087).